Consider the following 459-residue polypeptide: DNA polymerase subunit gamma-2 (459 aa).

Heterotrimer composed of a catalytic subunit and a homodimer of accessory subunits (POLG:POLG2).

The protein resides in the mitochondrion. Its subcellular location is the mitochondrion matrix. It is found in the mitochondrion nucleoid. In terms of biological role, accessory subunit of DNA polymerase gamma solely responsible for replication of mitochondrial DNA (mtDNA). Acts as an allosteric regulator of the holoenzyme activities. Enhances the polymerase activity and the processivity of POLG by increasing its interactions with the DNA template. Suppresses POLG exonucleolytic proofreading especially toward homopolymeric templates bearing mismatched termini. Binds to single-stranded DNA. This Mus musculus (Mouse) protein is DNA polymerase subunit gamma-2 (Polg2).